The primary structure comprises 86 residues: Large ribosomal subunit protein bL27 (86 aa).

The interval 1–24 (MATKKAGGSSRNGRDSAGRRLGVK) is disordered.

The protein belongs to the bacterial ribosomal protein bL27 family.

The chain is Large ribosomal subunit protein bL27 from Rickettsia conorii (strain ATCC VR-613 / Malish 7).